The following is a 153-amino-acid chain: Nucleoside diphosphate kinase (153 aa).

K13, F61, R89, T95, R106, and N116 together coordinate ATP. Residue H119 is the Pros-phosphohistidine intermediate of the active site.

This sequence belongs to the NDK family. As to quaternary structure, homohexamer. The cofactor is Mg(2+).

The protein resides in the cytoplasm. It carries out the reaction a 2'-deoxyribonucleoside 5'-diphosphate + ATP = a 2'-deoxyribonucleoside 5'-triphosphate + ADP. The catalysed reaction is a ribonucleoside 5'-diphosphate + ATP = a ribonucleoside 5'-triphosphate + ADP. Functionally, major role in the synthesis of nucleoside triphosphates other than ATP. The ATP gamma phosphate is transferred to the NDP beta phosphate via a ping-pong mechanism, using a phosphorylated active-site intermediate. The protein is Nucleoside diphosphate kinase (NDK) of Brugia malayi (Filarial nematode worm).